A 141-amino-acid polypeptide reads, in one-letter code: Large ribosomal subunit protein uL11 (141 aa).

It belongs to the universal ribosomal protein uL11 family. In terms of assembly, part of the ribosomal stalk of the 50S ribosomal subunit. Interacts with L10 and the large rRNA to form the base of the stalk. L10 forms an elongated spine to which L12 dimers bind in a sequential fashion forming a multimeric L10(L12)X complex. In terms of processing, one or more lysine residues are methylated.

Its function is as follows. Forms part of the ribosomal stalk which helps the ribosome interact with GTP-bound translation factors. The polypeptide is Large ribosomal subunit protein uL11 (Synechococcus sp. (strain CC9902)).